A 169-amino-acid chain; its full sequence is Cell division inhibitor SulA (169 aa).

The ftsZ binding stretch occupies residues 106 to 112; it reads ALRTGNY. The tract at residues 162–169 is lon protease binding; the sequence is KIHSNLYH.

This sequence belongs to the SulA family. Interacts with FtsZ. Post-translationally, is rapidly cleaved and degraded by the Lon protease once DNA damage is repaired.

Its function is as follows. Component of the SOS system and an inhibitor of cell division. Accumulation of SulA causes rapid cessation of cell division and the appearance of long, non-septate filaments. In the presence of GTP, binds a polymerization-competent form of FtsZ in a 1:1 ratio, thus inhibiting FtsZ polymerization and therefore preventing it from participating in the assembly of the Z ring. This mechanism prevents the premature segregation of damaged DNA to daughter cells during cell division. In Salmonella dublin (strain CT_02021853), this protein is Cell division inhibitor SulA.